A 249-amino-acid polypeptide reads, in one-letter code: Isoprenyl transferase (249 aa).

The active site involves D25. D25 serves as a coordination point for Mg(2+). Residues 26-29, W30, R38, H42, and 70-72 contribute to the substrate site; these read GNGR and STE. N73 (proton acceptor) is an active-site residue. Substrate-binding positions include W74, R76, R197, and 203-205; that span reads RLS. E216 serves as a coordination point for Mg(2+).

Belongs to the UPP synthase family. Homodimer. The cofactor is Mg(2+).

In terms of biological role, catalyzes the condensation of isopentenyl diphosphate (IPP) with allylic pyrophosphates generating different type of terpenoids. This is Isoprenyl transferase from Streptococcus thermophilus (strain CNRZ 1066).